The sequence spans 225 residues: Ribonuclease 3 (225 aa).

The RNase III domain maps to 5–127 (MNKLTSKLGY…IIGAIYLDSD (123 aa)). Position 40 (E40) interacts with Mg(2+). D44 is an active-site residue. The Mg(2+) site is built by D113 and E116. Residue E116 is part of the active site. Residues 154-224 (DPKTRLQEFL…AETALEQLTN (71 aa)) form the DRBM domain.

This sequence belongs to the ribonuclease III family. Homodimer. The cofactor is Mg(2+).

The protein localises to the cytoplasm. The enzyme catalyses Endonucleolytic cleavage to 5'-phosphomonoester.. Its function is as follows. Digests double-stranded RNA. Involved in the processing of primary rRNA transcript to yield the immediate precursors to the large and small rRNAs (23S and 16S). Processes some mRNAs, and tRNAs when they are encoded in the rRNA operon. Processes pre-crRNA and tracrRNA of type II CRISPR loci if present in the organism. This chain is Ribonuclease 3, found in Vibrio cholerae serotype O1 (strain ATCC 39315 / El Tor Inaba N16961).